A 497-amino-acid polypeptide reads, in one-letter code: Glucose-6-phosphate 1-dehydrogenase (497 aa).

NADP(+)-binding positions include 15-22, Arg49, and Lys153; that span reads GASGDLSK. D-glucose 6-phosphate is bound by residues Lys153, 183–187, Glu221, and Asp240; that span reads HYLGK. His245 (proton acceptor) is an active-site residue. Arg336 lines the NADP(+) pocket. A D-glucose 6-phosphate-binding site is contributed by Lys339. Positions 345, 349, and 371 each coordinate NADP(+). Residue Gln373 participates in D-glucose 6-phosphate binding. NADP(+) contacts are provided by residues 379-381, 399-401, and Arg466; these read YLK and DLT.

It belongs to the glucose-6-phosphate dehydrogenase family.

It carries out the reaction D-glucose 6-phosphate + NADP(+) = 6-phospho-D-glucono-1,5-lactone + NADPH + H(+). It functions in the pathway carbohydrate degradation; pentose phosphate pathway; D-ribulose 5-phosphate from D-glucose 6-phosphate (oxidative stage): step 1/3. In terms of biological role, catalyzes the rate-limiting step of the oxidative pentose-phosphate pathway, which represents a route for the dissimilation of carbohydrates besides glycolysis. The main function of this enzyme is to provide reducing power (NADPH) and pentose phosphates for fatty acid and nucleic acid synthesis. The sequence is that of Glucose-6-phosphate 1-dehydrogenase (ZWF) from Kluyveromyces lactis (strain ATCC 8585 / CBS 2359 / DSM 70799 / NBRC 1267 / NRRL Y-1140 / WM37) (Yeast).